Reading from the N-terminus, the 107-residue chain is UPF0145 protein BH1111 (107 aa).

The protein belongs to the UPF0145 family.

The chain is UPF0145 protein BH1111 from Halalkalibacterium halodurans (strain ATCC BAA-125 / DSM 18197 / FERM 7344 / JCM 9153 / C-125) (Bacillus halodurans).